Consider the following 157-residue polypeptide: Phosphopantetheine adenylyltransferase (157 aa).

Residue serine 9 participates in substrate binding. ATP contacts are provided by residues 9–10 and histidine 17; that span reads SF. Positions 41, 74, and 88 each coordinate substrate. ATP contacts are provided by residues 89 to 91, glutamate 99, and 123 to 129; these read GLR and YTHVSSS.

Belongs to the bacterial CoaD family. Homohexamer. Mg(2+) serves as cofactor.

It is found in the cytoplasm. The enzyme catalyses (R)-4'-phosphopantetheine + ATP + H(+) = 3'-dephospho-CoA + diphosphate. Its pathway is cofactor biosynthesis; coenzyme A biosynthesis; CoA from (R)-pantothenate: step 4/5. In terms of biological role, reversibly transfers an adenylyl group from ATP to 4'-phosphopantetheine, yielding dephospho-CoA (dPCoA) and pyrophosphate. In Micrococcus luteus (strain ATCC 4698 / DSM 20030 / JCM 1464 / CCM 169 / CCUG 5858 / IAM 1056 / NBRC 3333 / NCIMB 9278 / NCTC 2665 / VKM Ac-2230) (Micrococcus lysodeikticus), this protein is Phosphopantetheine adenylyltransferase.